Reading from the N-terminus, the 156-residue chain is ATP synthase subunit b (156 aa).

A helical transmembrane segment spans residues Ala-11 to Ala-31.

The protein belongs to the ATPase B chain family. F-type ATPases have 2 components, F(1) - the catalytic core - and F(0) - the membrane proton channel. F(1) has five subunits: alpha(3), beta(3), gamma(1), delta(1), epsilon(1). F(0) has three main subunits: a(1), b(2) and c(10-14). The alpha and beta chains form an alternating ring which encloses part of the gamma chain. F(1) is attached to F(0) by a central stalk formed by the gamma and epsilon chains, while a peripheral stalk is formed by the delta and b chains.

The protein localises to the cell inner membrane. Functionally, f(1)F(0) ATP synthase produces ATP from ADP in the presence of a proton or sodium gradient. F-type ATPases consist of two structural domains, F(1) containing the extramembraneous catalytic core and F(0) containing the membrane proton channel, linked together by a central stalk and a peripheral stalk. During catalysis, ATP synthesis in the catalytic domain of F(1) is coupled via a rotary mechanism of the central stalk subunits to proton translocation. Component of the F(0) channel, it forms part of the peripheral stalk, linking F(1) to F(0). The protein is ATP synthase subunit b of Enterobacter sp. (strain 638).